We begin with the raw amino-acid sequence, 291 residues long: Beta-lactamase Toho-1 (291 aa).

The N-terminal stretch at 1–29 (MMTQSIRRSMLTVMATLPLLFSSATLHAQ) is a signal peptide. Residue serine 73 is the Acyl-ester intermediate of the active site. 237-239 (KTG) is a binding site for substrate.

Belongs to the class-A beta-lactamase family. As to quaternary structure, monomer.

It catalyses the reaction a beta-lactam + H2O = a substituted beta-amino acid. Has strong cefotaxime-hydrolyzing activity. The chain is Beta-lactamase Toho-1 (bla) from Escherichia coli.